The primary structure comprises 429 residues: Gap junction gamma-2 protein (429 aa).

At 1–25 (MTNMSWSFLTRLLEEIHNHSTFVGK) the chain is on the cytoplasmic side. The helical transmembrane segment at 26-46 (VWLTVLVVFRIVLTAVGGESI) threads the bilayer. Over 47-78 (YSDEQTKFTCNTRQPGCDNVCYDAFAPLSHVR) the chain is Extracellular. A helical membrane pass occupies residues 79–99 (FWVFQIVVISTPSVMYLGYAV). Topologically, residues 100-214 (HRLARASQDE…EGLMRVYVAQ (115 aa)) are cytoplasmic. Residues 106-200 (SQDERRRASR…GPAGQHDGRR (95 aa)) are disordered. Residues 112 to 123 (RASRRRPSRRAP) show a composition bias toward basic residues. The segment covering 124–138 (RPPLPLPPPPHPGWP) has biased composition (pro residues). Residues 142 to 173 (DLGEEEPMLGLGEEDEDPGVAEGLGEDEEAED) show a composition bias toward acidic residues. The helical transmembrane segment at 215 to 235 (LVARAAFEVAFLVGQYLLYGF) threads the bilayer. The Extracellular portion of the chain corresponds to 236 to 263 (EVRPFFACSRQPCPHVVDCFVSRPTEKT). Residues 264-284 (VFLLVMYVVSCLCLLLNLCEM) traverse the membrane as a helical segment. The Cytoplasmic portion of the chain corresponds to 285 to 429 (AHLGLGNAQD…SREGKTTVWI (145 aa)). Disordered stretches follow at residues 296-316 (VRGRRPLPASPGPMPRPPPCA) and 361-429 (LGDL…TVWI). The span at 303–316 (PASPGPMPRPPPCA) shows a compositional bias: pro residues. Serine 366 is subject to Phosphoserine. Over residues 372 to 395 (LPANARGPPKPGAPASGSGSATSG) the composition is skewed to low complexity.

Belongs to the connexin family. Gamma-type subfamily. A connexon is composed of a hexamer of connexins. Interacts with TJP1.

It localises to the cell membrane. It is found in the cell junction. The protein localises to the gap junction. One gap junction consists of a cluster of closely packed pairs of transmembrane channels, the connexons, through which materials of low MW diffuse from one cell to a neighboring cell. May play a role in myelination in central and peripheral nervous systems. In Bos taurus (Bovine), this protein is Gap junction gamma-2 protein (GJC2).